The chain runs to 1363 residues: Insulin-like peptide receptor (1363 aa).

The N-terminal stretch at 1–29 (MRVVDKMAGLMWAALTLVIGLGLLVPSNG) is a signal peptide. 16 N-linked (GlcNAc...) asparagine glycosylation sites follow: asparagine 51, asparagine 97, asparagine 137, asparagine 278, asparagine 483, asparagine 599, asparagine 617, asparagine 665, asparagine 666, asparagine 711, asparagine 732, asparagine 736, asparagine 743, asparagine 816, asparagine 885, and asparagine 898. Fibronectin type-III domains are found at residues 473 to 586 (SFSR…TDAD) and 590 to 680 (HPQD…CPKS). 2 consecutive Fibronectin type-III domains span residues 712–804 (ETRA…LART) and 813–912 (IPGN…VEEE). The Extracellular segment spans residues 721–928 (ELPVTARPFY…QDPQQQVPVS (208 aa)). Positions 739-759 (LPSTNRTVPPTPTPNPNPQLE) are disordered. The chain crosses the membrane as a helical span at residues 929–949 (LMIGMGVGFSLLLILAVIFGI). The Cytoplasmic portion of the chain corresponds to 950 to 1363 (WYCTKKRFGD…NLRIPKSTLC (414 aa)). One can recognise a Protein kinase domain in the interval 994–1283 (ITLIRELGQG…EIVEILSPEL (290 aa)). ATP contacts are provided by residues 1000–1008 (LGQGSFGMV) and lysine 1028. The disordered stretch occupies residues 1091 to 1117 (PEEDVGLSDSPASNEAKNSPFAENDND). The active-site Proton acceptor is the aspartate 1148. Tyrosine 1174 carries the post-translational modification Phosphotyrosine; by autocatalysis. A disordered region spans residues 1316–1363 (DTETEMYPSGSEFSSTPSPPSETPYSHMNGSHPQNGSMNLRIPKSTLC). The segment covering 1322–1331 (YPSGSEFSST) has biased composition (low complexity). Residues 1343 to 1353 (MNGSHPQNGSM) are compositionally biased toward polar residues.

Belongs to the protein kinase superfamily. Tyr protein kinase family. Insulin receptor subfamily. As to quaternary structure, probable tetramer of 2 alpha and 2 beta chains linked by disulfide bonds. The alpha chains contribute to the formation of the ligand-binding domain, while the beta chains carry the kinase domain. It depends on Mn(2+) as a cofactor.

The protein resides in the membrane. The catalysed reaction is L-tyrosyl-[protein] + ATP = O-phospho-L-tyrosyl-[protein] + ADP + H(+). Functionally, this receptor binds to the insulin related peptide and has a tyrosine-protein kinase activity. The sequence is that of Insulin-like peptide receptor from Branchiostoma lanceolatum (Common lancelet).